A 197-amino-acid chain; its full sequence is Pyridoxal 5'-phosphate synthase subunit PdxT (197 aa).

L-glutamine is bound at residue 53 to 55 (GES). The active-site Nucleophile is C85. L-glutamine-binding positions include R114 and 142–143 (IR). Active-site charge relay system residues include H179 and E181.

Belongs to the glutaminase PdxT/SNO family. In the presence of PdxS, forms a dodecamer of heterodimers. Only shows activity in the heterodimer.

The enzyme catalyses aldehydo-D-ribose 5-phosphate + D-glyceraldehyde 3-phosphate + L-glutamine = pyridoxal 5'-phosphate + L-glutamate + phosphate + 3 H2O + H(+). The catalysed reaction is L-glutamine + H2O = L-glutamate + NH4(+). Its pathway is cofactor biosynthesis; pyridoxal 5'-phosphate biosynthesis. In terms of biological role, catalyzes the hydrolysis of glutamine to glutamate and ammonia as part of the biosynthesis of pyridoxal 5'-phosphate. The resulting ammonia molecule is channeled to the active site of PdxS. The protein is Pyridoxal 5'-phosphate synthase subunit PdxT of Thermococcus gammatolerans (strain DSM 15229 / JCM 11827 / EJ3).